Consider the following 124-residue polypeptide: Large ribosomal subunit protein bL12 (124 aa).

This sequence belongs to the bacterial ribosomal protein bL12 family. Homodimer. Part of the ribosomal stalk of the 50S ribosomal subunit. Forms a multimeric L10(L12)X complex, where L10 forms an elongated spine to which 2 to 4 L12 dimers bind in a sequential fashion. Binds GTP-bound translation factors.

Functionally, forms part of the ribosomal stalk which helps the ribosome interact with GTP-bound translation factors. Is thus essential for accurate translation. The sequence is that of Large ribosomal subunit protein bL12 from Sulfurovum sp. (strain NBC37-1).